The sequence spans 71 residues: Prophage lysis protein S homolog EssD (71 aa).

Belongs to the lambda phage S protein family.

This chain is Prophage lysis protein S homolog EssD (essD), found in Escherichia coli (strain K12).